The sequence spans 1372 residues: DNA-directed RNA polymerase subunit beta (1372 aa).

This sequence belongs to the RNA polymerase beta chain family. The RNAP catalytic core consists of 2 alpha, 1 beta, 1 beta' and 1 omega subunit. When a sigma factor is associated with the core the holoenzyme is formed, which can initiate transcription.

It catalyses the reaction RNA(n) + a ribonucleoside 5'-triphosphate = RNA(n+1) + diphosphate. Functionally, DNA-dependent RNA polymerase catalyzes the transcription of DNA into RNA using the four ribonucleoside triphosphates as substrates. The chain is DNA-directed RNA polymerase subunit beta from Bradyrhizobium sp. (strain ORS 278).